The primary structure comprises 614 residues: DNA mismatch repair protein MutL (614 aa).

A disordered region spans residues Pro355–Leu411. Residues Ser382–Gly401 are compositionally biased toward low complexity.

This sequence belongs to the DNA mismatch repair MutL/HexB family.

This protein is involved in the repair of mismatches in DNA. It is required for dam-dependent methyl-directed DNA mismatch repair. May act as a 'molecular matchmaker', a protein that promotes the formation of a stable complex between two or more DNA-binding proteins in an ATP-dependent manner without itself being part of a final effector complex. This is DNA mismatch repair protein MutL from Shewanella woodyi (strain ATCC 51908 / MS32).